Here is a 364-residue protein sequence, read N- to C-terminus: Homeobox protein Nkx-6.1 (364 aa).

The tract at residues L35–S134 is disordered. 2 stretches are compositionally biased toward low complexity: residues P48–A92 and A109–S134. Positions L101 to R268 are repressor domain. Position 189 is an asymmetric dimethylarginine (R189). Positions R236 to H295 form a DNA-binding region, homeobox. The disordered stretch occupies residues K294–S364. Residues K304–S317 show a composition bias toward basic and acidic residues. Positions Q306 to S364 are involved in DNA-binding.

As to expression, pancreatic beta cells.

The protein localises to the nucleus. Its function is as follows. Together with NKX2-2 and IRX3 acts to restrict the generation of motor neurons to the appropriate region of the neural tube. Belongs to the class II proteins of neuronal progenitor factors, which are induced by SHH signals. Transcription factor which binds to specific A/T-rich DNA sequences in the promoter regions of a number of genes. Involved in transcriptional regulation in islet beta cells. Binds to the insulin promoter and is involved in regulation of the insulin gene. This is Homeobox protein Nkx-6.1 (NKX6-1) from Mesocricetus auratus (Golden hamster).